The chain runs to 86 residues: MKPGIHPDYRPVVFHDTSVDEYFVVGSTLKTDRTIEWKDGKTYPYFTLDVSSSSHPFYTGKQRVVQAEGRIANFNRRFGQFTSEKE.

This sequence belongs to the bacterial ribosomal protein bL31 family. Type B subfamily. As to quaternary structure, part of the 50S ribosomal subunit.

The chain is Large ribosomal subunit protein bL31B from Vibrio parahaemolyticus serotype O3:K6 (strain RIMD 2210633).